Here is a 284-residue protein sequence, read N- to C-terminus: Pantothenate synthetase (284 aa).

An ATP-binding site is contributed by 30-37 (MGNLHDGH). Catalysis depends on His37, which acts as the Proton donor. Position 61 (Gln61) interacts with (R)-pantoate. Residue Gln61 participates in beta-alanine binding. Residue 149 to 152 (GEKD) coordinates ATP. A (R)-pantoate-binding site is contributed by Gln155. Residues Val178 and 186 to 189 (LSSR) contribute to the ATP site.

This sequence belongs to the pantothenate synthetase family. Homodimer.

It localises to the cytoplasm. It catalyses the reaction (R)-pantoate + beta-alanine + ATP = (R)-pantothenate + AMP + diphosphate + H(+). Its pathway is cofactor biosynthesis; (R)-pantothenate biosynthesis; (R)-pantothenate from (R)-pantoate and beta-alanine: step 1/1. Functionally, catalyzes the condensation of pantoate with beta-alanine in an ATP-dependent reaction via a pantoyl-adenylate intermediate. This is Pantothenate synthetase from Erwinia tasmaniensis (strain DSM 17950 / CFBP 7177 / CIP 109463 / NCPPB 4357 / Et1/99).